A 487-amino-acid chain; its full sequence is Variant surface glycoprotein WRATAT B (487 aa).

Positions 1–19 (MWIILALLTLAGSRVAHGA) are cleaved as a signal peptide. N-linked (GlcNAc...) asparagine glycans are attached at residues Asn71, Asn84, Asn418, and Asn465. A disordered region spans residues 443 to 468 (KPKAGTEAATTGPGERDAGATANTTG). A lipid anchor (GPI-anchor amidated serine) is attached at Ser470. Residues 471-487 (NSFVIKTSPLLFAFLLF) constitute a propeptide, removed in mature form.

It is found in the cell membrane. Its function is as follows. VSG forms a coat on the surface of the parasite. The trypanosome evades the immune response of the host by expressing a series of antigenically distinct VSGs from an estimated 1000 VSG genes. The polypeptide is Variant surface glycoprotein WRATAT B (Trypanosoma brucei rhodesiense).